We begin with the raw amino-acid sequence, 177 residues long: Nicotinamide-nucleotide adenylyltransferase (177 aa).

This sequence belongs to the archaeal NMN adenylyltransferase family.

The protein localises to the cytoplasm. It catalyses the reaction beta-nicotinamide D-ribonucleotide + ATP + H(+) = diphosphate + NAD(+). The protein operates within cofactor biosynthesis; NAD(+) biosynthesis; NAD(+) from nicotinamide D-ribonucleotide: step 1/1. The polypeptide is Nicotinamide-nucleotide adenylyltransferase (Halobacterium salinarum (strain ATCC 29341 / DSM 671 / R1)).